The sequence spans 455 residues: Nucleolar protein 12 (455 aa).

Disordered regions lie at residues 1 to 104 and 117 to 142; these read MSSF…ENEN and QNEEQDESKESSEAKSSKVAEERTKA. Over residues 24-37 the composition is skewed to basic and acidic residues; the sequence is NTRDGPVSKDELVK. A compositionally biased stretch (polar residues) spans 51–66; that stretch reads PKQQTNENESTLNQSA. The span at 68-91 shows a compositional bias: acidic residues; the sequence is ESDEEEEEYNDESNEGDDSDDAEQ. Over residues 124–141 the composition is skewed to basic and acidic residues; sequence SKESSEAKSSKVAEERTK. 2 RRM domains span residues 160 to 258 and 266 to 351; these read RTVF…HVSH and RTIF…RAKS. Disordered stretches follow at residues 333 to 402 and 420 to 455; these read LETG…RSTV and AIKGIKGSKKGKKVKKPRIRERSTKFKEERKTMNKV. The segment covering 339–348 has biased composition (basic residues); it reads KKGRKLRISR. Positions 349 to 363 are enriched in polar residues; that stretch reads AKSNAKPSLMSPNHF. Basic residues predominate over residues 425–438; the sequence is KGSKKGKKVKKPRI. The span at 439–455 shows a compositional bias: basic and acidic residues; the sequence is RERSTKFKEERKTMNKV.

It belongs to the RRM RBM34 family.

The protein localises to the nucleus. It localises to the nucleolus. Functionally, involved in pre-25S rRNA processing. This Candida albicans (strain SC5314 / ATCC MYA-2876) (Yeast) protein is Nucleolar protein 12 (NOP12).